The primary structure comprises 376 residues: Growth/differentiation factor 8 (376 aa).

The first 24 residues, 1 to 24, serve as a signal peptide directing secretion; that stretch reads MIQKPQMYVYIYLFVLIAAGPVDL. A propeptide spanning residues 25 to 267 is cleaved from the precursor; the sequence is NEDSEREANV…VTDTPKRSRR (243 aa). N-linked (GlcNAc...) asparagine glycosylation is present at Asn-72. Disulfide bonds link Cys-273/Cys-283, Cys-282/Cys-341, Cys-310/Cys-373, and Cys-314/Cys-375.

This sequence belongs to the TGF-beta family. In terms of assembly, homodimer; disulfide-linked. Interacts with WFIKKN2, leading to inhibit its activity. Interacts with FSTL3. Post-translationally, synthesized as large precursor molecule that undergoes proteolytic cleavage to generate an N-terminal propeptide and a disulfide linked C-terminal dimer, which is the biologically active molecule. The circulating form consists of a latent complex of the C-terminal dimer and other proteins, including its propeptide, which maintain the C-terminal dimer in a latent, inactive state. Ligand activation requires additional cleavage of the prodomain by a tolloid-like metalloproteinase.

It is found in the secreted. In terms of biological role, acts specifically as a negative regulator of skeletal muscle growth. The chain is Growth/differentiation factor 8 (Mstn) from Rattus norvegicus (Rat).